A 67-amino-acid chain; its full sequence is ATP synthase F(0) complex subunit 8 (67 aa).

A helical membrane pass occupies residues 8–24; sequence TWLIMISSMILTLFITF. N6-acetyllysine; alternate is present on Lys-54. The residue at position 54 (Lys-54) is an N6-succinyllysine; alternate. At Lys-57 the chain carries N6-acetyllysine.

It belongs to the ATPase protein 8 family. In terms of assembly, component of the ATP synthase complex composed at least of ATP5F1A/subunit alpha, ATP5F1B/subunit beta, ATP5MC1/subunit c (homooctomer), MT-ATP6/subunit a, MT-ATP8/subunit 8, ATP5ME/subunit e, ATP5MF/subunit f, ATP5MG/subunit g, ATP5MK/subunit k, ATP5MJ/subunit j, ATP5F1C/subunit gamma, ATP5F1D/subunit delta, ATP5F1E/subunit epsilon, ATP5PF/subunit F6, ATP5PB/subunit b, ATP5PD/subunit d, ATP5PO/subunit OSCP. ATP synthase complex consists of a soluble F(1) head domain (subunits alpha(3) and beta(3)) - the catalytic core - and a membrane F(0) domain - the membrane proton channel (subunits c, a, 8, e, f, g, k and j). These two domains are linked by a central stalk (subunits gamma, delta, and epsilon) rotating inside the F1 region and a stationary peripheral stalk (subunits F6, b, d, and OSCP). Interacts with PRICKLE3.

The protein localises to the mitochondrion membrane. In terms of biological role, subunit 8, of the mitochondrial membrane ATP synthase complex (F(1)F(0) ATP synthase or Complex V) that produces ATP from ADP in the presence of a proton gradient across the membrane which is generated by electron transport complexes of the respiratory chain. ATP synthase complex consist of a soluble F(1) head domain - the catalytic core - and a membrane F(1) domain - the membrane proton channel. These two domains are linked by a central stalk rotating inside the F(1) region and a stationary peripheral stalk. During catalysis, ATP synthesis in the catalytic domain of F(1) is coupled via a rotary mechanism of the central stalk subunits to proton translocation. In vivo, can only synthesize ATP although its ATP hydrolase activity can be activated artificially in vitro. Part of the complex F(0) domain. The protein is ATP synthase F(0) complex subunit 8 of Halichoerus grypus (Gray seal).